A 396-amino-acid chain; its full sequence is 1-deoxy-D-xylulose 5-phosphate reductoisomerase (396 aa).

NADPH-binding residues include Thr13, Gly14, Ser15, Ile16, and Asn127. Lys128 contacts 1-deoxy-D-xylulose 5-phosphate. Glu129 provides a ligand contact to NADPH. Residue Asp153 participates in Mn(2+) binding. 1-deoxy-D-xylulose 5-phosphate-binding residues include Ser154, Glu155, Ser184, and His207. Position 155 (Glu155) interacts with Mn(2+). An NADPH-binding site is contributed by Gly213. Ser220, Asn225, Lys226, and Glu229 together coordinate 1-deoxy-D-xylulose 5-phosphate. Glu229 is a binding site for Mn(2+).

Belongs to the DXR family. Mg(2+) serves as cofactor. It depends on Mn(2+) as a cofactor.

The catalysed reaction is 2-C-methyl-D-erythritol 4-phosphate + NADP(+) = 1-deoxy-D-xylulose 5-phosphate + NADPH + H(+). The protein operates within isoprenoid biosynthesis; isopentenyl diphosphate biosynthesis via DXP pathway; isopentenyl diphosphate from 1-deoxy-D-xylulose 5-phosphate: step 1/6. Inhibited by fosmidomycin and 3-(N-acetyl-N-hydroxyamino)-propylphosphonic acid (FR-900098). Catalyzes the NADPH-dependent rearrangement and reduction of 1-deoxy-D-xylulose-5-phosphate (DXP) to 2-C-methyl-D-erythritol 4-phosphate (MEP). This chain is 1-deoxy-D-xylulose 5-phosphate reductoisomerase, found in Pseudomonas aeruginosa (strain ATCC 15692 / DSM 22644 / CIP 104116 / JCM 14847 / LMG 12228 / 1C / PRS 101 / PAO1).